The sequence spans 382 residues: 8-amino-7-oxononanoate synthase (382 aa).

The substrate site is built by arginine 21 and histidine 131. Pyridoxal 5'-phosphate-binding residues include serine 178, histidine 206, and threonine 232. Lysine 235 carries the N6-(pyridoxal phosphate)lysine modification. Residue threonine 349 coordinates substrate.

The protein belongs to the class-II pyridoxal-phosphate-dependent aminotransferase family. BioF subfamily. Homodimer. It depends on pyridoxal 5'-phosphate as a cofactor.

The catalysed reaction is 6-carboxyhexanoyl-[ACP] + L-alanine + H(+) = (8S)-8-amino-7-oxononanoate + holo-[ACP] + CO2. It participates in cofactor biosynthesis; biotin biosynthesis. Functionally, catalyzes the decarboxylative condensation of pimeloyl-[acyl-carrier protein] and L-alanine to produce 8-amino-7-oxononanoate (AON), [acyl-carrier protein], and carbon dioxide. The protein is 8-amino-7-oxononanoate synthase of Serratia marcescens.